A 23-amino-acid chain; its full sequence is NADH-ubiquinone oxidoreductase 29 kDa subunit (23 aa).

As to quaternary structure, complex I is composed of about 45 different subunits.

The protein localises to the mitochondrion inner membrane. It catalyses the reaction a ubiquinone + NADH + 5 H(+)(in) = a ubiquinol + NAD(+) + 4 H(+)(out). Transfer of electrons from NADH to the respiratory chain. The immediate electron acceptor for the enzyme is believed to be ubiquinone. In Solanum tuberosum (Potato), this protein is NADH-ubiquinone oxidoreductase 29 kDa subunit.